The following is a 518-amino-acid chain: Cytochrome P450 704C1 (518 aa).

The next 2 helical transmembrane spans lie at 5–25 and 299–319; these read ILTMFVTVSALALACSLWIAS and VILNFMVAARDTTAIALSWFI. Cys461 is a binding site for heme.

Belongs to the cytochrome P450 family. The cofactor is heme.

It is found in the membrane. This Pinus taeda (Loblolly pine) protein is Cytochrome P450 704C1 (CYP704C1).